A 235-amino-acid chain; its full sequence is MTHQKRLSVPKSWKVGKKGNKWISTTRPGPHSQARSLPLGIIIRDILKLVDNSREGKRILSEGKVLVDGIPRKDLRFPVGLFDVITLPLVNEAYRMLQDEKGRLTLHKLNETNVNKLCRINNKTTVKGGKFQLNLNDGTNIIGSNEYGTKDSLILSIPDKQVVKHLKFEVGNLAMVVGGQHSGETGKIMEIREVKSSRHNTVMISGETDFETIEDYVIVIGEDKPEIRLGGEISE.

The S4 RNA-binding domain maps to 37-100; it reads LPLGIIIRDI…NEAYRMLQDE (64 aa).

It belongs to the eukaryotic ribosomal protein eS4 family.

The sequence is that of Small ribosomal subunit protein eS4 from Methanosarcina acetivorans (strain ATCC 35395 / DSM 2834 / JCM 12185 / C2A).